Here is a 376-residue protein sequence, read N- to C-terminus: Probable cysteine protease RDL3 (376 aa).

Positions 1–27 (MAISFRTLALLTLSVLLISISLGVVTA) are cleaved as a signal peptide. A propeptide spans 28 to 126 (TESQRNEGEV…ERYQYKEGDV (99 aa)) (activation peptide). Asn80 is a glycosylation site (N-linked (GlcNAc...) asparagine). 2 disulfide bridges follow: Cys149/Cys192 and Cys183/Cys226. Cys152 is an active-site residue. A glycan (N-linked (GlcNAc...) asparagine) is linked at Asn270. A disulfide bridge links Cys283 with Cys336. Residues His290 and Asn311 contribute to the active site. N-linked (GlcNAc...) asparagine glycosylation is present at Asn349.

The protein belongs to the peptidase C1 family. Expressed in root hairs.

Functionally, probable thiol protease. The protein is Probable cysteine protease RDL3 of Arabidopsis thaliana (Mouse-ear cress).